The sequence spans 143 residues: Sporulation-specific cell division protein SsgB (143 aa).

This sequence belongs to the SsgA family. Interacts with SsgA. Interacts with FtsZ (via N-terminus).

Its subcellular location is the cell septum. Its function is as follows. Involved in sporulation-specific cell division. Required for early stages of sporulation. Important in the process of growth cessation prior to sporulation-specific cell division. Recruits cell division protein FtsZ to the future septum sites and tethers the contractile ring structure (Z ring) to the cytoplasmic membrane during sporulation. Stimulates polymerization and filament length of FtsZ in vitro. The polypeptide is Sporulation-specific cell division protein SsgB (Frankia casuarinae (strain DSM 45818 / CECT 9043 / HFP020203 / CcI3)).